The chain runs to 1642 residues: Coiled-coil domain-containing protein 7A (1642 aa).

The interval 21 to 51 (PYKKGLLNSSPKPKEKHNAKSKYGKNESMVL) is disordered. Residues 161 to 184 (VNQMEEISKDQSNLEELQSDGKTA) form an LRR 1 repeat. Residues 279 to 330 (LEKALNDQQTIESKYKQLETDFQMLIMEKTLLEAEIRRLREIERVKSAAKEE) are a coiled coil. The stretch at 1310–1333 (IKELSKTLNLDGGDIELSDFVFKT) is one LRR 2 repeat.

In terms of tissue distribution, exclusively expressed in the testes.

The polypeptide is Coiled-coil domain-containing protein 7A (Mus musculus (Mouse)).